A 256-amino-acid chain; its full sequence is Cytokine-inducible SH2-containing protein (256 aa).

The SH2 domain occupies 81-162 (WYWGSITASE…PDVVSLVQHY (82 aa)). Residues 168 to 190 (ADTRSDSPDPAPTPALPVSKPDA) form a disordered region. The 49-residue stretch at 207-255 (KLVQPFVRRSSARSLQHLCRLVINRLVTDVDCLPLPRRMADYLRQYPFQ) folds into the SOCS box domain.

As to quaternary structure, stably associated with the tyrosine-phosphorylated IL3 receptor beta chain and tyrosine-phosphorylated EPO receptor (EPOR).

It functions in the pathway protein modification; protein ubiquitination. Functionally, SOCS family proteins form part of a classical negative feedback system that regulates cytokine signal transduction. CIS is involved in the negative regulation of cytokines that signal through the JAK-STAT5 pathway such as erythropoietin, prolactin and interleukin 3 (IL3) receptor. Inhibits STAT5 trans-activation by suppressing its tyrosine phosphorylation. May be a substrate recognition component of a SCF-like ECS (Elongin BC-CUL2/5-SOCS-box protein) E3 ubiquitin-protein ligase complex which mediates the ubiquitination and subsequent proteasomal degradation of target proteins. This Rattus norvegicus (Rat) protein is Cytokine-inducible SH2-containing protein (Cish).